Consider the following 416-residue polypeptide: Phakinin (416 aa).

Residues 1-48 (MSKRRVAADLPSGTNSSMPVQRHRVSSLRGTHSPSSLDSPPASRTSAV) form a disordered region. Position 2 is an N-acetylserine (Ser-2). The interval 2–115 (SKRRVAADLP…HTTVEDLGGC (114 aa)) is head. Residues Ser-27, Ser-33, Ser-36, and Ser-91 each carry the phosphoserine modification. Positions 28 to 48 (LRGTHSPSSLDSPPASRTSAV) are enriched in polar residues. An IF rod domain is found at 105-416 (DHTTVEDLGG…HALLDREENN (312 aa)). 3 coiled-coil regions span residues 116–146 (LVEY…SKAK), 170–249 (LENA…VKVL), and 308–402 (QTQE…LQKD). The tail stretch occupies residues 397-416 (SQLQKDVASYHALLDREENN).

The protein belongs to the intermediate filament family. As to quaternary structure, part of a complex required for lens intermediate filament formation composed of BFSP1, BFSP2 and CRYAA. Found in a complex composed of PPL (via C-terminal linker domain), BFSP1 and BFSP2 in the retinal lens. Within the complex interacts with PPL (via C-terminal linker domain) and with BFSP1. Identified in a complex that contains VIM, EZR, AHNAK, BFSP1, BFSP2, ANK2, PLEC, PRX and spectrin. Interacts with LGSN. Interacts with VIM. Detected in retina lens fiber cells (at protein level). Also expressed in the lens epithelium, abundantly expressed in the anterior and anterolateral epithelium, less frequently expressed nearer the lens coronal equator (at protein level).

Its subcellular location is the cell membrane. The protein resides in the cytoplasm. It localises to the cytoskeleton. The protein localises to the cell cortex. Functionally, required for the correct formation of lens intermediate filaments as part of a complex composed of BFSP1, BFSP2 and CRYAA. Plays a role in maintenance of retinal lens optical clarity. This is Phakinin (Bfsp2) from Mus musculus (Mouse).